The following is a 314-amino-acid chain: Epithelial cell adhesion molecule (314 aa).

An N-terminal signal peptide occupies residues 1–23 (MAPPQVLAFGLLVAAATAAVAAD). Topologically, residues 24–265 (QEGCVCENYK…PPEFSMQGLQ (242 aa)) are extracellular. 6 disulfides stabilise this stretch: Cys-27/Cys-46, Cys-29/Cys-59, Cys-38/Cys-48, Cys-66/Cys-99, Cys-110/Cys-116, and Cys-118/Cys-135. Residue Asn-37 is glycosylated (N-linked (GlcNAc...) asparagine). The region spanning 63-135 (ATKCLVMKAE…RTDKDSEISC (73 aa)) is the Thyroglobulin type-1 domain. N-linked (GlcNAc...) asparagine glycosylation is found at Asn-74 and Asn-111. Asn-198 carries an N-linked (GlcNAc...) asparagine glycan. A helical transmembrane segment spans residues 266–288 (AGIIAVIVVVVVAIIAGIIVLVV). Topologically, residues 289–314 (SRKKSMTKYEKAEIKEMGEMHRELNA) are cytoplasmic.

This sequence belongs to the EPCAM family. As to quaternary structure, monomer. Interacts with phosphorylated CLDN7. Glycosylation at Asn-198 is crucial for protein stability.

It is found in the lateral cell membrane. The protein resides in the cell junction. Its subcellular location is the tight junction. Functionally, may act as a physical homophilic interaction molecule between intestinal epithelial cells (IECs) and intraepithelial lymphocytes (IELs) at the mucosal epithelium for providing immunological barrier as a first line of defense against mucosal infection. Plays a role in embryonic stem cells proliferation and differentiation. Up-regulates the expression of FABP5, MYC and cyclins A and E. This is Epithelial cell adhesion molecule (EPCAM) from Bos taurus (Bovine).